The chain runs to 84 residues: Kidney-associated antigen 1 (84 aa).

The disordered stretch occupies residues 31-84; it reads PGAAAAHLPRWPPPQLAASRREAPPLSQRPHRTQGAGSPPETNEKLTNPQVKEK. Polar residues predominate over residues 75 to 84; it reads KLTNPQVKEK.

As to expression, expressed in testis and kidney, and, at lower levels, in urinary bladder and liver. Expressed by a high proportion of tumors of various histologic origin, including melanomas, sarcomas and colorectal carcinomas.

This chain is Kidney-associated antigen 1 (KAAG1), found in Homo sapiens (Human).